The sequence spans 976 residues: Peptidylglycine alpha-amidating monooxygenase (976 aa).

The first 25 residues, 1 to 25 (MAGRARSGLLLLLLGLLALQSSCLA), serve as a signal peptide directing secretion. The peptidylglycine alpha-hydroxylating monooxygenase stretch occupies residues 1 to 497 (MAGRARSGLL…EGPWEPEPSG (497 aa)). A propeptide spanning residues 26–35 (FRSPLSVFKR) is cleaved from the precursor. Over 36 to 866 (FKETTRSFSN…QKLSTEPGSG (831 aa)) the chain is Intragranular. 5 disulfides stabilise this stretch: C47/C186, C81/C126, C114/C131, C227/C334, and C293/C315. Cu(2+)-binding residues include H107 and H108. Cu(2+) is bound by residues H172, H242, H244, and M314. Residues 498–820 (DFHVEEELDW…LTEKMEHRSV (323 aa)) form a peptidyl-alpha-hydroxyglycine alpha-amidating lyase region. NHL repeat units lie at residues 501–544 (VEEE…NSFD), 570–611 (AEIL…LDPH), 620–665 (LGRS…FSPS), and 673–717 (GEES…FKTD). V520 serves as a coordination point for Ca(2+). R533 is an a protein binding site. H585 lines the Zn(2+) pocket. L587 contacts Ca(2+). A disulfide bond links C634 and C655. Y654 contacts a protein. H690 is a Zn(2+) binding site. Residues C702 and C713 are joined by a disulfide bond. R706 provides a ligand contact to a protein. An N-linked (GlcNAc...) asparagine glycan is attached at N765. The NHL 5 repeat unit spans residues 769–812 (GEIIDVFKPVRKHFDMPHDIVASEDGTVYIGDAHTNTVWKFTLT). Position 774 is a sulfotyrosine (V774). H786 is a Zn(2+) binding site. D787 contacts Ca(2+). E792 is subject to Sulfotyrosine. A helical transmembrane segment spans residues 867 to 890 (VSVVLITTLLVIPVLVLLAIVMFI). Residues 891 to 976 (RWKKSRAFGD…APLPKPAPSS (86 aa)) lie on the Cytoplasmic side of the membrane. Residues S921, S932, and S945 each carry the phosphoserine modification. Residues 928–945 (NFFASRKGYSRKGFDRVS) are interaction with RASSF9. The disordered stretch occupies residues 940–976 (GFDRVSTEGSDQEKDEDDGTESEEEYSAPLPKPAPSS). At T946 the chain carries Phosphothreonine. Residue S949 is modified to Phosphoserine. Residues 952-965 (EKDEDDGTESEEEY) are compositionally biased toward acidic residues. Residue T959 is modified to Phosphothreonine. Phosphoserine is present on S961.

This sequence in the C-terminal section; belongs to the peptidyl-alpha-hydroxyglycine alpha-amidating lyase family. It in the N-terminal section; belongs to the copper type II ascorbate-dependent monooxygenase family. As to quaternary structure, monomer. Interacts with RASSF9. Zn(2+) serves as cofactor. It depends on Cu(2+) as a cofactor.

The protein localises to the cytoplasmic vesicle. The protein resides in the secretory vesicle membrane. Its subcellular location is the membrane. It localises to the secreted. It carries out the reaction a [peptide]-C-terminal glycine + 2 L-ascorbate + O2 = a [peptide]-C-terminal (2S)-2-hydroxyglycine + 2 monodehydro-L-ascorbate radical + H2O. It catalyses the reaction a [peptide]-C-terminal (2S)-2-hydroxyglycine = a [peptide]-C-terminal amide + glyoxylate. The enzyme catalyses N-dodecanoylglycine + 2 L-ascorbate + O2 = N-dodecanoyl-(2S)-hydroxyglycine + 2 monodehydro-L-ascorbate radical + H2O. The catalysed reaction is N-dodecanoyl-(2S)-hydroxyglycine = dodecanamide + glyoxylate. It carries out the reaction N-(9Z,12Z,15Z)-octadecatrienoylglycine + 2 L-ascorbate + O2 = N-(9Z,12Z,15Z)-octadecatrienoyl-(2S)-hydroxyglycine + 2 monodehydro-L-ascorbate radical + H2O. It catalyses the reaction N-(9Z,12Z,15Z)-octadecatrienoyl-(2S)-hydroxyglycine = (9Z,12Z,15Z)-octadecatrienamide + glyoxylate. The enzyme catalyses N-(9Z-octadecenoyl)glycine + 2 L-ascorbate + O2 = N-(9Z-octadecenoyl)-(2S)-hydroxyglycine + 2 monodehydro-L-ascorbate radical + H2O. The catalysed reaction is N-(9Z-octadecenoyl)-(2S)-hydroxyglycine = (9Z)-octadecenamide + glyoxylate. It carries out the reaction N-tetradecanoylglycine + 2 L-ascorbate + O2 = N-tetradecanoyl-(2S)-hydroxyglycine + 2 monodehydro-L-ascorbate radical + H2O. It catalyses the reaction N-tetradecanoyl-(2S)-hydroxyglycine = tetradecamide + glyoxylate. The enzyme catalyses N-decanoylglycine + 2 L-ascorbate + O2 = N-decanoyl-(2S)-hydroxyglycine + 2 monodehydro-L-ascorbate radical + H2O. The catalysed reaction is N-decanoyl-(2S)-hydroxyglycine = decanamide + glyoxylate. It carries out the reaction N-octanoylglycine + 2 L-ascorbate + O2 = N-octanoyl-(2S)-hydroxyglycine + 2 monodehydro-L-ascorbate radical + H2O. It catalyses the reaction N-octanoyl-(2S)-hydroxyglycine = octanamide + glyoxylate. PAM activity is inhibited by EDTA, phenylglyoxal and diethyl pyrocarbonate. PAL activity is stimulated by cadmium and inhibited by mercury. In terms of biological role, bifunctional enzyme that catalyzes amidation of the C-terminus of proteins. Alpha-amidation is present at the C-terminus of many endocrine hormones and neuropeptides and is required for their activity. C-terminal amidation also takes place in response to protein fragmentation triggered by oxidative stress, promoting degradation of amidated protein fragments by the proteasome. Alpha-amidation involves two sequential reactions, both of which are catalyzed by separate catalytic domains of the enzyme. The first step, catalyzed by peptidyl alpha-hydroxylating monooxygenase (PHM) domain, is the copper-, ascorbate-, and O2- dependent stereospecific hydroxylation (with S stereochemistry) at the alpha-carbon (C-alpha) of the C-terminal glycine of the peptidylglycine substrate. The second step, catalyzed by the peptidylglycine amidoglycolate lyase (PAL) domain, is the zinc-dependent cleavage of the N-C-alpha bond, producing the alpha-amidated peptide and glyoxylate. Similarly, catalyzes the two-step conversion of an N-fatty acylglycine to a primary fatty acid amide and glyoxylate. This is Peptidylglycine alpha-amidating monooxygenase from Rattus norvegicus (Rat).